Here is an 887-residue protein sequence, read N- to C-terminus: PAN2-PAN3 deadenylation complex subunit PAN3 (887 aa).

A C3H1-type zinc finger spans residues 43–71 (GVKLKYCRYYAKDKTCFYGEECQFLHEDP). Disordered stretches follow at residues 102–147 (AVAG…IPGM), 284–307 (QTPNPTASEFIPKGGSTSRLSNVS), and 325–392 (SPAT…SGQV). A compositionally biased stretch (gly residues) spans 122-138 (PGTGAAAGGGGSSGGLD). Positions 147–498 (MDGGALTDTS…PPPNRIQKSS (352 aa)) are necessary and sufficient for interaction with PABPC1 but not needed for interaction with PAN2. The PABPC-interacting motif-2 (PAM-2) motif lies at 284-299 (QTPNPTASEFIPKGGS). A compositionally biased stretch (polar residues) spans 298 to 307 (GSTSRLSNVS). Residues Ser-354 and Ser-361 each carry the phosphoserine modification. Polar residues predominate over residues 363 to 392 (TPNPASYMVPSSASTSVNNPVSQTPSSGQV). The segment at 463-750 (QIDQADMPAV…SVNDIMPMIG (288 aa)) is pseudokinase domain. Residues Arg-521, 570–577 (DFHAGGET), and 644–645 (TK) contribute to the ATP site. The stretch at 751–789 (ARFYTQLDAAQMRNDVIEEDLAKEVQNGRLFRLLAKLGT) forms a coiled coil. The segment at 790 to 887 (INERPEFQKD…ELIAAANGQL (98 aa)) is knob domain.

It belongs to the protein kinase superfamily. PAN3 family. In terms of assembly, homodimer. Forms a heterotrimer with a catalytic subunit PAN2 to form the poly(A)-nuclease (PAN) deadenylation complex. Interacts (via PAM-2 motif) with poly(A)-binding protein PABPC1 (via PABC domain), conferring substrate specificity of the enzyme complex. Interacts with the GW182 family proteins TNRC6A, TNRC6B and TNRC6. Interacts with YTHDF3. Interacts with PAN2. Interacts (via N-terminus) with PABPC1 at lower efficiency than isoform 3. As to quaternary structure, interacts with PAN2. Interacts (via N-terminus) with PABPC1 at higher efficiency than isoform 1.

The protein resides in the cytoplasm. The protein localises to the P-body. It is found in the nucleus. Functionally, regulatory subunit of the poly(A)-nuclease (PAN) deadenylation complex, one of two cytoplasmic mRNA deadenylases involved in general and miRNA-mediated mRNA turnover. PAN specifically shortens poly(A) tails of RNA and the activity is stimulated by poly(A)-binding protein (PABP). PAN deadenylation is followed by rapid degradation of the shortened mRNA tails by the CCR4-NOT complex. Deadenylated mRNAs are then degraded by two alternative mechanisms, namely exosome-mediated 3'-5' exonucleolytic degradation, or deadenylation-dependent mRNA decapping and subsequent 5'-3' exonucleolytic degradation by XRN1. PAN3 acts as a regulator for PAN activity, recruiting the catalytic subunit PAN2 to mRNA via its interaction with RNA and PABP, and to miRNA targets via its interaction with GW182 family proteins. Decreases PAN2-mediated deadenylation, possibly by preventing progression into the second CCR4-NOT mediated stage of biphasic deadenylation. Has a significant effect on mRNA stability, generally stabilizing a subset of the transcriptome. Stabilizes mRNAs degraded by the AU-rich element (ARE)-mediated mRNA decay pathway but promotes degradation of mRNAs by the microRNA-mediated pathway. Its activity influences mRNP remodeling, specifically reducing formation of a subset of P-bodies containing GW220, an isoform of TNRC6A. In terms of biological role, enhances PAN2 deadenylase activity and has an extensive effect on mRNA stability, generally enhancing mRNA decay across the transcriptome by multiple pathways, including the AU-rich element (ARE)-mediated pathway, microRNA-mediated pathway and the nonsense-mediated pathway (NMD). Its activity is required for efficient P-body formation. May be involved in regulating mRNAs of genes involved in cell cycle progression and cell proliferation. The protein is PAN2-PAN3 deadenylation complex subunit PAN3 of Homo sapiens (Human).